We begin with the raw amino-acid sequence, 295 residues long: Glycine N-phenylacetyltransferase (295 aa).

At Lys-43 the chain carries N6-acetyllysine. Lys-48 is subject to N6-acetyllysine; alternate. Position 48 is an N6-succinyllysine; alternate (Lys-48). Lys-80 is modified (N6-acetyllysine). N6-acetyllysine; alternate is present on Lys-182. The residue at position 182 (Lys-182) is an N6-succinyllysine; alternate.

It belongs to the glycine N-acyltransferase family.

It is found in the mitochondrion. The enzyme catalyses phenylacetyl-CoA + glycine = phenylacetylglycine + CoA + H(+). Functionally, mitochondrial acyltransferase which transfers the acyl group to the N-terminus of glycine. Can conjugate a multitude of substrates to form a variety of N-acylglycines. Catalyzes the conjugation of arylacetic acids with glycine but does not have activity towards any alkyl-CoA. In Bos taurus (Bovine), this protein is Glycine N-phenylacetyltransferase.